Reading from the N-terminus, the 295-residue chain is Ribosomal RNA small subunit methyltransferase A (295 aa).

The S-adenosyl-L-methionine site is built by N33, V35, G60, E81, D111, and N129.

Belongs to the class I-like SAM-binding methyltransferase superfamily. rRNA adenine N(6)-methyltransferase family. RsmA subfamily.

It localises to the cytoplasm. It catalyses the reaction adenosine(1518)/adenosine(1519) in 16S rRNA + 4 S-adenosyl-L-methionine = N(6)-dimethyladenosine(1518)/N(6)-dimethyladenosine(1519) in 16S rRNA + 4 S-adenosyl-L-homocysteine + 4 H(+). Specifically dimethylates two adjacent adenosines (A1518 and A1519) in the loop of a conserved hairpin near the 3'-end of 16S rRNA in the 30S particle. May play a critical role in biogenesis of 30S subunits. This Corynebacterium diphtheriae (strain ATCC 700971 / NCTC 13129 / Biotype gravis) protein is Ribosomal RNA small subunit methyltransferase A.